The following is an 829-amino-acid chain: Probable receptor-like protein kinase At5g59700 (829 aa).

An N-terminal signal peptide occupies residues methionine 1–glycine 24. Over tyrosine 25–methionine 406 the chain is Extracellular. Residues asparagine 40, asparagine 216, asparagine 279, and asparagine 380 are each glycosylated (N-linked (GlcNAc...) asparagine). Residues isoleucine 407–leucine 427 traverse the membrane as a helical segment. Topologically, residues tyrosine 428–arginine 829 are cytoplasmic. Residues phenylalanine 482–alanine 755 form the Protein kinase domain. Residues isoleucine 488 to valine 496 and lysine 510 each bind ATP. Residue aspartate 606 is the Proton acceptor of the active site.

The protein belongs to the protein kinase superfamily. Ser/Thr protein kinase family.

It localises to the cell membrane. In Arabidopsis thaliana (Mouse-ear cress), this protein is Probable receptor-like protein kinase At5g59700.